Consider the following 226-residue polypeptide: Ribose-5-phosphate isomerase A (226 aa).

Residues 33–36 (TGST), 86–89 (DGAD), and 99–102 (KGGG) each bind substrate. The active-site Proton acceptor is Glu108. Lys126 lines the substrate pocket.

This sequence belongs to the ribose 5-phosphate isomerase family. Homodimer.

The catalysed reaction is aldehydo-D-ribose 5-phosphate = D-ribulose 5-phosphate. Its pathway is carbohydrate degradation; pentose phosphate pathway; D-ribose 5-phosphate from D-ribulose 5-phosphate (non-oxidative stage): step 1/1. Functionally, catalyzes the reversible conversion of ribose-5-phosphate to ribulose 5-phosphate. The chain is Ribose-5-phosphate isomerase A from Bordetella pertussis (strain Tohama I / ATCC BAA-589 / NCTC 13251).